We begin with the raw amino-acid sequence, 768 residues long: MTISPPEKEQKKEPVLDKPIETDAIPVDFSKLDKPGFWSKSLAKGPKTTTWIWNLHADAHDFDTHVGDLQETSRKVFSAHFGHLAVIFIWMSAAFFHGARFSNYSGWLSDPTHVKPGAQVVWPIVGQEMLNADLGGNYHGIQITSGIFQMWRGWGITNETELMALAIGALLMAAIMLHGGIYHYHKAAPKLDWFRNLESMLNHHIAGLVGLGSIAWAGHCIHIGAPTAALMDAIDAGKPLIIDGIPIASIADMPLPHELCNPAIASQIFPGLAGRTVENFFTTNWWAFSDFLTFKGGLNPVTGSLWMTDISHHHLAFGVLAVLGGHLYRTMFGIGHSLKEILDNHAGDPILFPAPNGHKGIYEFLANSWHAQLGLNLAMIGSLSIIISHHMYAMPPYPYLSIDYPTVLGLFTHHMWIGGLFIVGAAAHAGIAMIRDYDPAVHIDNVLDRILKARDALISHLNWACMFLGFHSFGLYIHNDVMRALGRPADMFSDTGIQLQPVFAQWIQNIHNSAAGSTTLAGANVNLQPGLVSEVFNGSVSQVGGKIGIAPIPLGTADFMIHHIHAFTIHVTLLILLKGVLFARSSRLIPDKANLGFRFPCDGPGRGGTCQVSSWDHVFLGLFWMYNGLSVVIFHFSWKMQSDVWGLTGGNFAQSSITINGWLRDFLWAQSSQVLTSYGQPISMYGLMFLGAHFVWAFSLMFLFSGRGYWQELFESIIWAHNKLNLAPTIQPRALSITQGRAVGAAHFLLGGIATTWAFFHARLIGLG.

Transmembrane regions (helical) follow at residues 76–99 (VFSA…FHGA), 162–185 (LMAL…YHYH), 201–225 (LNHH…HIGA), 310–328 (ISHH…GHLY), 369–392 (WHAQ…HHMY), 408–434 (LGLF…IAMI), 456–478 (ALIS…LYIH), and 559–577 (FMIH…LILL). Positions 601 and 610 each coordinate [4Fe-4S] cluster. Helical transmembrane passes span 617–638 (HVFL…HFSW) and 682–704 (ISMY…MFLF). Residue histidine 693 participates in divinylchlorophyll a' binding. Residues methionine 701 and tyrosine 709 each contribute to the divinyl chlorophyll a site. Tryptophan 710 provides a ligand contact to phylloquinone. Residues 742–762 (AVGAAHFLLGGIATTWAFFHA) form a helical membrane-spanning segment.

The protein belongs to the PsaA/PsaB family. The PsaA/B heterodimer binds the P700 divinyl chlorophyll special pair and subsequent electron acceptors. PSI consists of a core antenna complex that captures photons, and an electron transfer chain that converts photonic excitation into a charge separation. The cyanobacterial PSI reaction center is composed of one copy each of PsaA,B,C,D,E,F,I,J,K,L,M and X, and forms trimeric complexes. PSI electron transfer chain: 5 divinyl chlorophyll a, 1 divinyl chlorophyll a', 2 phylloquinones and 3 4Fe-4S clusters. PSI core antenna: 90 divinyl chlorophyll a, 22 carotenoids, 3 phospholipids and 1 galactolipid. P700 is a divinyl chlorophyll a/divinyl chlorophyll a' dimer, A0 is one or more divinyl chlorophyll a, A1 is one or both phylloquinones and FX is a shared 4Fe-4S iron-sulfur center. serves as cofactor.

Its subcellular location is the cellular thylakoid membrane. The catalysed reaction is reduced [plastocyanin] + hnu + oxidized [2Fe-2S]-[ferredoxin] = oxidized [plastocyanin] + reduced [2Fe-2S]-[ferredoxin]. Functionally, psaA and PsaB bind P700, the primary electron donor of photosystem I (PSI), as well as the electron acceptors A0, A1 and FX. PSI is a plastocyanin/cytochrome c6-ferredoxin oxidoreductase, converting photonic excitation into a charge separation, which transfers an electron from the donor P700 chlorophyll pair to the spectroscopically characterized acceptors A0, A1, FX, FA and FB in turn. Oxidized P700 is reduced on the lumenal side of the thylakoid membrane by plastocyanin or cytochrome c6. The sequence is that of Photosystem I P700 chlorophyll a apoprotein A1 from Prochlorococcus marinus (strain NATL1A).